We begin with the raw amino-acid sequence, 699 residues long: MTQKLVRLVIVSLAITVTLLQAKTDNQEVSALNVMFTSLNSPSKLKGWKANGGDPCEDSWEGVKCKGSSVTELQLSGFELGGSRGYLLSNLKSLTTFDLSKNNLKGNIPYQLPPNIANLDFSENELDGNVPYSLSQMKNLQSINLGQNKLNGELPDMFQKLSKLETLDFSLNKLSGKLPQSFANLTSLKKLHLQDNRFTGDINVLRNLAIDDLNVEDNQFEGWIPNELKDIDSLLTGGNDWSTETAPPPPPGVKYGRKSSGSKDGGGITAGTGMVIAGACLGVLVLIIVLIALVSKKKSSLSPHFIDEDNSHHTPKFKSLTSHGSAQELRVDFGNDYKDGKSGDSGDENIHRIGSKGLKHYVSSRVMSFTDTEFANKLNAKRTTSTRSAVEFELSDLQSATANFSPGNLLGEGSIGRVYRAKYSDGRTLAVKKIDSTLFDSGKSEGITPIVMSLSKIRHQNIAELVGYCSEQGHNMLVYEYFRNGSLHEFLHLSDCFSKPLTWNTRVRIALGTARAVEYLHEACSPSVMHKNIKSSNILLDADLNPRLSDYGLSKFYLRTSQNLGEGYNAPEARDPSAYTPKSDVYSFGVVMLELLTGRVPFDGEKPRPERSLVRWATPQLHDIDALSNIADPALHGLYPPKSLSRFADIIALCVQVEPEFRPPMSEVVEALVRMVQRSSMKLKDDLSSSYRAHDDYDY.

The first 22 residues, 1 to 22 (MTQKLVRLVIVSLAITVTLLQA), serve as a signal peptide directing secretion. The Extracellular segment spans residues 23 to 273 (KTDNQEVSAL…DGGGITAGTG (251 aa)). LRR repeat units lie at residues 93–115 (SLTT…LPPN), 116–136 (IANL…SLSQ), 139–161 (NLQS…FQKL), 163–186 (KLET…ANLT), and 187–209 (SLKK…RNLA). Asparagine 184 carries N-linked (GlcNAc...) asparagine glycosylation. The disordered stretch occupies residues 239–263 (NDWSTETAPPPPPGVKYGRKSSGSK). A helical transmembrane segment spans residues 274–294 (MVIAGACLGVLVLIIVLIALV). At 295–699 (SKKKSSLSPH…SYRAHDDYDY (405 aa)) the chain is on the cytoplasmic side. Serine 368 carries the phosphoserine modification. The 272-residue stretch at 404 to 675 (FSPGNLLGEG…SEVVEALVRM (272 aa)) folds into the Protein kinase domain. Residues 410–418 (LGEGSIGRV) and lysine 432 each bind ATP.

It belongs to the protein kinase superfamily. Ser/Thr protein kinase family. Expressed in leaves and flowers.

It localises to the membrane. The protein is Protein STRUBBELIG-RECEPTOR FAMILY 5 (SRF5) of Arabidopsis thaliana (Mouse-ear cress).